The following is a 251-amino-acid chain: Auxin-responsive protein IAA29 (251 aa).

The short motif at 3 to 7 is the EAR-like (transcriptional repression) element; it reads LDLGL. Residues 159–246 enclose the PB1 domain; it reads SMYVKVKMDG…SIIRDRPCAY (88 aa).

It belongs to the Aux/IAA family. In terms of assembly, homodimers and heterodimers.

Its subcellular location is the nucleus. Aux/IAA proteins are short-lived transcriptional factors that function as repressors of early auxin response genes at low auxin concentrations. Repression is thought to result from the interaction with auxin response factors (ARFs), proteins that bind to the auxin-responsive promoter element (AuxRE). Formation of heterodimers with ARF proteins may alter their ability to modulate early auxin response genes expression. The protein is Auxin-responsive protein IAA29 (IAA29) of Arabidopsis thaliana (Mouse-ear cress).